The primary structure comprises 529 residues: Bifunctional purine biosynthesis protein PurH (529 aa).

An MGS-like domain is found at 1 to 148 (MQQRRPVRRA…KNHKDVAIVV (148 aa)).

It belongs to the PurH family.

It carries out the reaction (6R)-10-formyltetrahydrofolate + 5-amino-1-(5-phospho-beta-D-ribosyl)imidazole-4-carboxamide = 5-formamido-1-(5-phospho-D-ribosyl)imidazole-4-carboxamide + (6S)-5,6,7,8-tetrahydrofolate. The enzyme catalyses IMP + H2O = 5-formamido-1-(5-phospho-D-ribosyl)imidazole-4-carboxamide. Its pathway is purine metabolism; IMP biosynthesis via de novo pathway; 5-formamido-1-(5-phospho-D-ribosyl)imidazole-4-carboxamide from 5-amino-1-(5-phospho-D-ribosyl)imidazole-4-carboxamide (10-formyl THF route): step 1/1. The protein operates within purine metabolism; IMP biosynthesis via de novo pathway; IMP from 5-formamido-1-(5-phospho-D-ribosyl)imidazole-4-carboxamide: step 1/1. The protein is Bifunctional purine biosynthesis protein PurH of Salmonella newport (strain SL254).